A 271-amino-acid polypeptide reads, in one-letter code: MSAPCHCQHADDDYSSIKKLSVLSPELQQEFKDPNHPANLICELCRLFYDNNWVTGTGGGISIRDVDGPNPNLVYIAPSGVQKERIQPWEMFLVELPQEKILRTPNDIPKELTKSYKYKPSACTPLFISCYTLRNAGACIHTHSQHAVMVTLFFENEKEFVISHIEQIKALPKLKYNQETGKIEKIGSMEYYDKLVIPIIENTPHEEDLTDSLQEAIKNYPGASAVLVRRHGIYVWGETVWKAKVYNEAIDYLLELAVKMKLAGIPLVKEE.

Residue C123 participates in substrate binding. The Zn(2+) site is built by H141 and H143. E166 acts as the Proton donor/acceptor in catalysis. H231 contributes to the Zn(2+) binding site.

The protein belongs to the aldolase class II family. MtnB subfamily. Zn(2+) serves as cofactor.

Its subcellular location is the cytoplasm. The catalysed reaction is 5-(methylsulfanyl)-D-ribulose 1-phosphate = 5-methylsulfanyl-2,3-dioxopentyl phosphate + H2O. The protein operates within amino-acid biosynthesis; L-methionine biosynthesis via salvage pathway; L-methionine from S-methyl-5-thio-alpha-D-ribose 1-phosphate: step 2/6. Catalyzes the dehydration of methylthioribulose-1-phosphate (MTRu-1-P) into 2,3-diketo-5-methylthiopentyl-1-phosphate (DK-MTP-1-P). The protein is Methylthioribulose-1-phosphate dehydratase of Candida dubliniensis (strain CD36 / ATCC MYA-646 / CBS 7987 / NCPF 3949 / NRRL Y-17841) (Yeast).